A 666-amino-acid chain; its full sequence is Threonine--tRNA ligase (666 aa).

One can recognise a TGS domain in the interval Met1–Arg64. The segment at Asp245–Pro553 is catalytic. Zn(2+) is bound by residues Cys347, His398, and His530.

It belongs to the class-II aminoacyl-tRNA synthetase family. As to quaternary structure, homodimer. Zn(2+) is required as a cofactor.

Its subcellular location is the cytoplasm. It carries out the reaction tRNA(Thr) + L-threonine + ATP = L-threonyl-tRNA(Thr) + AMP + diphosphate + H(+). Catalyzes the attachment of threonine to tRNA(Thr) in a two-step reaction: L-threonine is first activated by ATP to form Thr-AMP and then transferred to the acceptor end of tRNA(Thr). Also edits incorrectly charged L-seryl-tRNA(Thr). The sequence is that of Threonine--tRNA ligase from Allorhizobium ampelinum (strain ATCC BAA-846 / DSM 112012 / S4) (Agrobacterium vitis (strain S4)).